Consider the following 349-residue polypeptide: Inositol-tetrakisphosphate 1-kinase 2 (349 aa).

1D-myo-inositol 1,3,4-trisphosphate-binding residues include Lys48 and Lys90. The ATP site is built by Arg125 and Lys175. 1D-myo-inositol 1,3,4-trisphosphate contacts are provided by His186 and Lys218. ATP-binding positions include 207 to 218 (QEFVNHGGILFK) and Ser233. Asp298, Asp313, and Asn315 together coordinate Mg(2+). A 1D-myo-inositol 1,3,4-trisphosphate-binding site is contributed by Asn315.

This sequence belongs to the ITPK1 family. Monomer. Mg(2+) is required as a cofactor.

It catalyses the reaction 1D-myo-inositol 3,4,5,6-tetrakisphosphate + ATP = 1D-myo-inositol 1,3,4,5,6-pentakisphosphate + ADP + H(+). The enzyme catalyses 1D-myo-inositol 1,3,4-trisphosphate + ATP = 1D-myo-inositol 1,3,4,5-tetrakisphosphate + ADP + H(+). The catalysed reaction is 1D-myo-inositol 1,3,4-trisphosphate + ATP = 1D-myo-inositol 1,3,4,6-tetrakisphosphate + ADP + H(+). Functionally, kinase that can phosphorylate various inositol polyphosphate such as Ins(3,4,5,6)P4 or Ins(1,3,4)P3 and participates in phytic acid biosynthesis in developing seeds. Phytic acid is the primary storage form of phosphorus in cereal grains and other plant seeds. The polypeptide is Inositol-tetrakisphosphate 1-kinase 2 (ITPK2) (Oryza sativa subsp. indica (Rice)).